The sequence spans 279 residues: 5'-nucleotidase SurE 1 (279 aa).

D12, D13, S45, and N103 together coordinate a divalent metal cation.

It belongs to the SurE nucleotidase family. The cofactor is a divalent metal cation.

The protein resides in the cytoplasm. It catalyses the reaction a ribonucleoside 5'-phosphate + H2O = a ribonucleoside + phosphate. Functionally, nucleotidase that shows phosphatase activity on nucleoside 5'-monophosphates. In Chlamydia caviae (strain ATCC VR-813 / DSM 19441 / 03DC25 / GPIC) (Chlamydophila caviae), this protein is 5'-nucleotidase SurE 1.